Here is a 294-residue protein sequence, read N- to C-terminus: Probable 2-(5''-triphosphoribosyl)-3'-dephosphocoenzyme-A synthase (294 aa).

Belongs to the CitG/MdcB family.

The enzyme catalyses 3'-dephospho-CoA + ATP = 2'-(5''-triphospho-alpha-D-ribosyl)-3'-dephospho-CoA + adenine. The sequence is that of Probable 2-(5''-triphosphoribosyl)-3'-dephosphocoenzyme-A synthase from Streptococcus pyogenes serotype M5 (strain Manfredo).